Reading from the N-terminus, the 94-residue chain is MKKIKLQELKDSEILEQLEEARKVLRNSRFQYGVARSLENPKIISNTKKKIAKLLTIQRERQLKANPGERKSRVFSRAKRKKKNLARLSAKAKG.

The tract at residues 65-94 (ANPGERKSRVFSRAKRKKKNLARLSAKAKG) is disordered. Residues 73–94 (RVFSRAKRKKKNLARLSAKAKG) show a composition bias toward basic residues.

This sequence belongs to the universal ribosomal protein uL29 family.

In Leptospira interrogans serogroup Icterohaemorrhagiae serovar copenhageni (strain Fiocruz L1-130), this protein is Large ribosomal subunit protein uL29.